Reading from the N-terminus, the 70-residue chain is Antimicrobial peptide VpCT1 (70 aa).

A signal peptide spans 1 to 23 (MKNQFAVLLVALVLLQLFSQSEA). Residue Leu36 is modified to Leucine amide. The propeptide occupies 37–70 (GKRGLRNFDLEQMDDTYEPELSEADLRYLQDLLR).

Belongs to the non-disulfide-bridged peptide (NDBP) superfamily. Short antimicrobial peptide (group 4) family. As to expression, expressed by the venom gland.

It localises to the secreted. It is found in the target cell membrane. Functionally, antimicrobial peptide with potent activity against bacteria S.aureus (MIC=4.7 uM) and E.coli (MIC=31.5 uM), and pathogenic yeasts C.albicans (MIC=25 uM) and C.glabrata (MIC=12.5 uM). Is not very effective against P.aeruginosa (MIC=150 and &gt;300 uM). Also provokes moderate hemolysis on human erythrocytes (HC(50)=10.5 uM). This is Antimicrobial peptide VpCT1 from Mesomexovis punctatus (Scorpion).